We begin with the raw amino-acid sequence, 98 residues long: Transcription elongation factor A protein-like 7 (98 aa).

The segment covering 1–22 has biased composition (basic and acidic residues); that stretch reads MQKSCNEKEGKPKGSEAKREDE. The interval 1-33 is disordered; the sequence is MQKSCNEKEGKPKGSEAKREDEQPCGALEGQRL. A coiled-coil region spans residues 59–89; sequence GEEMTGEEEEMERCLEEIRSLRKKFRALHSN.

It belongs to the TFS-II family. TFA subfamily.

The protein localises to the nucleus. In terms of biological role, plays a role in the negative regulation of NF-kappa-B signaling at the basal level by modulating transcriptional activity of NF-kappa-B on its target gene promoters. Associates with cyclin D1 promoter containing Myc E-box sequence and transcriptionally represses cyclin D1 expression. Regulates telomerase reverse transcriptase expression and telomerase activity in both ALT (alternative lengthening of telomeres)and telomerase-positive cell lines. This is Transcription elongation factor A protein-like 7 (Tceal7) from Mus musculus (Mouse).